The sequence spans 142 residues: Peptide methionine sulfoxide reductase MsrB (142 aa).

Residues 2–125 (IKKDKNELNE…NSAAIQFIPY (124 aa)) enclose the MsrB domain. C114 functions as the Nucleophile in the catalytic mechanism.

It belongs to the MsrB Met sulfoxide reductase family.

The catalysed reaction is L-methionyl-[protein] + [thioredoxin]-disulfide + H2O = L-methionyl-(R)-S-oxide-[protein] + [thioredoxin]-dithiol. In Staphylococcus haemolyticus (strain JCSC1435), this protein is Peptide methionine sulfoxide reductase MsrB.